The chain runs to 217 residues: 3,4-dihydroxy-2-butanone 4-phosphate synthase (217 aa).

Residues 37–38, aspartate 42, 150–154, and glutamate 174 each bind D-ribulose 5-phosphate; these read RE and RRGHT. Position 38 (glutamate 38) interacts with Mg(2+). Histidine 153 is a binding site for Mg(2+).

This sequence belongs to the DHBP synthase family. In terms of assembly, homodimer. Mg(2+) is required as a cofactor. The cofactor is Mn(2+).

The enzyme catalyses D-ribulose 5-phosphate = (2S)-2-hydroxy-3-oxobutyl phosphate + formate + H(+). Its pathway is cofactor biosynthesis; riboflavin biosynthesis; 2-hydroxy-3-oxobutyl phosphate from D-ribulose 5-phosphate: step 1/1. Catalyzes the conversion of D-ribulose 5-phosphate to formate and 3,4-dihydroxy-2-butanone 4-phosphate. This is 3,4-dihydroxy-2-butanone 4-phosphate synthase from Aeromonas salmonicida (strain A449).